A 194-amino-acid chain; its full sequence is Casparian strip membrane protein 2 (194 aa).

Residues 1–32 (MSTTIDIPESSKVVKGKGVVAAPLRPGGWKKG) lie on the Cytoplasmic side of the membrane. A helical membrane pass occupies residues 33–53 (VAIMDFILRLGAIAAALGAAA). Topologically, residues 54 to 82 (TMGTSDQTLPFFTQFFQFEASYDSFTTFQ) are extracellular. The chain crosses the membrane as a helical span at residues 83 to 103 (FFVITMALVGGYLVLSLPFSV). Residues 104–115 (VAIIRPHAVGPR) lie on the Cytoplasmic side of the membrane. Residues 116 to 136 (LFLIILDTVFLTLATASAASA) form a helical membrane-spanning segment. Residues 137–168 (AAVVYLAHNGDQDTNWLAICNQFGDFCAQTSS) are Extracellular-facing. The chain crosses the membrane as a helical span at residues 169–189 (AVVSSFVAVVVFVLLIVMSAL). At 190-194 (AMGKP) the chain is on the cytoplasmic side.

It belongs to the Casparian strip membrane proteins (CASP) family. Homodimer and heterodimers.

The protein resides in the cell membrane. In terms of biological role, regulates membrane-cell wall junctions and localized cell wall deposition. Required for establishment of the Casparian strip membrane domain (CSD) and the subsequent formation of Casparian strips, a cell wall modification of the root endodermis that determines an apoplastic barrier between the intraorganismal apoplasm and the extraorganismal apoplasm and prevents lateral diffusion. This chain is Casparian strip membrane protein 2, found in Vigna unguiculata (Cowpea).